A 947-amino-acid chain; its full sequence is Vacuolar membrane protease (947 aa).

Over 1–15 (MRFKALLRAIFRFRK) the chain is Cytoplasmic. The helical transmembrane segment at 16–36 (TNFSILLIITYAIIIALLVFD) threads the bilayer. Over 37–358 (RSRYKLDLPN…GLFFVVVDTK (322 aa)) the chain is Vacuolar. Residues Asn-46, Asn-92, Asn-108, and Asn-121 are each glycosylated (N-linked (GlcNAc...) asparagine). Zn(2+) contacts are provided by His-156 and Asp-168. Residue Glu-200 is the Proton acceptor of the active site. Zn(2+)-binding residues include Glu-201, Glu-226, and His-300. A glycan (N-linked (GlcNAc...) asparagine) is linked at Asn-319. Residues 359-379 (HLFYADIFMLIVGPILLMMKA) form a helical membrane-spanning segment. Residues 380–391 (HLDKRRRLERSR) lie on the Cytoplasmic side of the membrane. Residues 392-412 (LVQLRLLLSLGLSVVFLLLLT) form a helical membrane-spanning segment. At 413–428 (KSLNSFNPFVYSADYR) the chain is on the vacuolar side. Residues 429 to 449 (TPLTGLFLLFVTVNYLIVTLA) form a helical membrane-spanning segment. Over 450-458 (ERLNPTESY) the chain is Cytoplasmic. Residues 459 to 479 (KTVAINQIFIIAWLMQLYITL) traverse the membrane as a helical segment. The Vacuolar segment spans residues 480–489 (RMAKSDFTLT). Residues 490–510 (GTYPLSIFSGCLIVALSLGLF) form a helical membrane-spanning segment. Residues 511–601 (GTKNKAVNDA…DKNSDFSKHY (91 aa)) lie on the Cytoplasmic side of the membrane. Composition is skewed to polar residues over residues 522–531 (NSSVRYASSQ) and 546–567 (NINQ…TDLH). A disordered region spans residues 522–573 (NSSVRYASSQNDEDNPLPSQDRGENINQVRDTGNQEVTSNTNTDLHSNAEEV). Residues 602 to 622 (NWIVQFLCIVPISSFIFLFSL) form a helical membrane-spanning segment. Residues 623–641 (DYTLDAIHKMVQETTDDVQ) lie on the Vacuolar side of the membrane. A helical transmembrane segment spans residues 642–662 (LICIIITIGVILLALPILPFI). Residues 663 to 669 (SKLNYQS) are Cytoplasmic-facing. The helical transmembrane segment at 670 to 690 (SVIIAIIGVLLFGKSLVMQPF) threads the bilayer. The Vacuolar portion of the chain corresponds to 691-947 (SEIAPLKVRF…LVVIKDKIQL (257 aa)). N-linked (GlcNAc...) asparagine glycans are attached at residues Asn-742, Asn-784, Asn-801, and Asn-833.

Belongs to the peptidase M28 family. Requires Zn(2+) as cofactor.

It localises to the vacuole membrane. Its function is as follows. May be involved in vacuolar sorting and osmoregulation. This Candida glabrata (strain ATCC 2001 / BCRC 20586 / JCM 3761 / NBRC 0622 / NRRL Y-65 / CBS 138) (Yeast) protein is Vacuolar membrane protease.